Consider the following 141-residue polypeptide: Large ribosomal subunit protein uL16 (141 aa).

It belongs to the universal ribosomal protein uL16 family. As to quaternary structure, part of the 50S ribosomal subunit.

Its function is as follows. Binds 23S rRNA and is also seen to make contacts with the A and possibly P site tRNAs. In Geobacillus thermodenitrificans (strain NG80-2), this protein is Large ribosomal subunit protein uL16.